The chain runs to 778 residues: LPS-assembly protein LptD (778 aa).

The signal sequence occupies residues 1-23 (MKTRYSVLSVAMTAAFYTQYAQA).

Belongs to the LptD family. In terms of assembly, component of the lipopolysaccharide transport and assembly complex. Interacts with LptE and LptA.

It localises to the cell outer membrane. Its function is as follows. Together with LptE, is involved in the assembly of lipopolysaccharide (LPS) at the surface of the outer membrane. This chain is LPS-assembly protein LptD, found in Actinobacillus pleuropneumoniae serotype 7 (strain AP76).